A 141-amino-acid polypeptide reads, in one-letter code: Small ribosomal subunit protein eS17w (141 aa).

Belongs to the eukaryotic ribosomal protein eS17 family.

This is Small ribosomal subunit protein eS17w (RPS17D) from Arabidopsis thaliana (Mouse-ear cress).